We begin with the raw amino-acid sequence, 704 residues long: Polyribonucleotide nucleotidyltransferase (704 aa).

Residues Asp487 and Asp493 each contribute to the Mg(2+) site. A KH domain is found at 554-613; it reads PRLLTIKIHPDKIREVIGKGGSTIQAITKETGTQIDIQDDGTIIIASVNAIAAQAAKSRI. One can recognise an S1 motif domain in the interval 623–691; sequence GRIYEGKVAK…KQGRIRLSIK (69 aa).

This sequence belongs to the polyribonucleotide nucleotidyltransferase family. As to quaternary structure, component of the RNA degradosome, which is a multiprotein complex involved in RNA processing and mRNA degradation. Mg(2+) is required as a cofactor.

The protein resides in the cytoplasm. The enzyme catalyses RNA(n+1) + phosphate = RNA(n) + a ribonucleoside 5'-diphosphate. Involved in mRNA degradation. Catalyzes the phosphorolysis of single-stranded polyribonucleotides processively in the 3'- to 5'-direction. The polypeptide is Polyribonucleotide nucleotidyltransferase (Xanthomonas campestris pv. campestris (strain B100)).